The sequence spans 324 residues: Succinylglutamate desuccinylase (324 aa).

Residues H53, E56, and H148 each contribute to the Zn(2+) site. The active site involves E211.

Belongs to the AspA/AstE family. Succinylglutamate desuccinylase subfamily. Zn(2+) is required as a cofactor.

The enzyme catalyses N-succinyl-L-glutamate + H2O = L-glutamate + succinate. The protein operates within amino-acid degradation; L-arginine degradation via AST pathway; L-glutamate and succinate from L-arginine: step 5/5. In terms of biological role, transforms N(2)-succinylglutamate into succinate and glutamate. The sequence is that of Succinylglutamate desuccinylase from Acinetobacter baumannii (strain SDF).